The sequence spans 159 residues: MTKLDFKAVLKQHHTVRLHQTAQDWKQAIQLCIHPLIAAKLVQPAYFDDILKSVAQYGPYFIIAENVAMPHAQNNGTVQQNCFSLVTLKEPVYFDNDPRPVRLLIGLAATSAAIHTTEALPQIAALVEDTQVVKDLLDCCDETSLFAVIDRVNLHKYLT.

The PTS EIIA type-2 domain maps to 9–152 (VLKQHHTVRL…TSLFAVIDRV (144 aa)). His-71 (tele-phosphohistidine intermediate) is an active-site residue. At His-71 the chain carries Phosphohistidine.

The protein resides in the cytoplasm. The phosphoenolpyruvate-dependent sugar phosphotransferase system (sugar PTS), a major carbohydrate active transport system, catalyzes the phosphorylation of incoming sugar substrates concomitantly with their translocation across the cell membrane. The enzyme II UlaABC PTS system is involved in ascorbate transport. The protein is Ascorbate-specific PTS system EIIA component (ulaC) of Mycoplasma pneumoniae (strain ATCC 29342 / M129 / Subtype 1) (Mycoplasmoides pneumoniae).